The primary structure comprises 932 residues: Protocadherin gamma-A9 (932 aa).

The signal sequence occupies residues 1-28 (MAAPTKCQLRGRLVLLCSLLGMLWEARA). Cadherin domains lie at 29-133 (SQIR…APKF), 134-242 (QAES…APVF), 243-347 (AQRI…RPEV), 348-452 (TITS…PPAF), 453-562 (SQAS…APEI), and 570-683 (DGST…IPAD). The Extracellular portion of the chain corresponds to 29-692 (SQIRYSVPEE…DLEASDLTLY (664 aa)). Residues Asn47 and Asn127 are each glycosylated (N-linked (GlcNAc...) asparagine). N-linked (GlcNAc...) asparagine glycosylation is found at Asn389, Asn419, and Asn545. The helical transmembrane segment at 693-713 (LVVAVAVVSCVFLTFVITLLA) threads the bilayer. The Cytoplasmic segment spans residues 714 to 932 (LRLRHWHSSH…KKKSGKKEKK (219 aa)). 2 disordered regions span residues 803–841 (DTPLVPQAPPNTDWRFSQAQRPGTSGSQNGDDTGTWPNN) and 902–932 (ATLTNAAGKRDGKAPAGGNGNKKKSGKKEKK). The segment covering 816 to 841 (WRFSQAQRPGTSGSQNGDDTGTWPNN) has biased composition (polar residues). The span at 922–932 (NKKKSGKKEKK) shows a compositional bias: basic residues.

It is found in the cell membrane. Functionally, potential calcium-dependent cell-adhesion protein. May be involved in the establishment and maintenance of specific neuronal connections in the brain. This Pan troglodytes (Chimpanzee) protein is Protocadherin gamma-A9 (PCDHGA9).